Reading from the N-terminus, the 249-residue chain is DNA repair protein RecO (249 aa).

This sequence belongs to the RecO family.

In terms of biological role, involved in DNA repair and RecF pathway recombination. This is DNA repair protein RecO from Polaromonas sp. (strain JS666 / ATCC BAA-500).